The following is a 382-amino-acid chain: GDP-mannose-dependent alpha-(1-6)-phosphatidylinositol monomannoside mannosyltransferase (382 aa).

Positions 200, 205, 257, and 294 each coordinate GDP-alpha-D-mannose.

The protein belongs to the glycosyltransferase group 1 family. Glycosyltransferase 4 subfamily.

The enzyme catalyses a 1,2-diacyl-sn-glycero-3-phospho-[alpha-D-mannopyranosyl-(1&lt;-&gt;6)-D-myo-inositol] + GDP-alpha-D-mannose = a 2,6-O-bis(alpha-D-mannopyranosyl)-1-phosphatidyl-1D-myo-inositol + GDP + H(+). It carries out the reaction a 1,2-diacyl-sn-glycero-3-phospho-[alpha-D-6-acyl-mannopyranosyl-(1&lt;-&gt;6)-D-myo-inositol] + GDP-alpha-D-mannose = a 2-O-(alpha-D-mannosyl)-6-O-(6-O-acyl-alpha-D-mannosyl)-1-phosphatidyl-1D-myo-inositol + GDP + H(+). It functions in the pathway phospholipid metabolism; phosphatidylinositol metabolism. In terms of biological role, involved in the biosynthesis of phosphatidyl-myo-inositol mannosides (PIM) which are early precursors in the biosynthesis of lipomannans (LM) and lipoarabinomannans (LAM). Catalyzes the addition of a mannosyl residue from GDP-D-mannose (GDP-Man) to the position 6 of a phosphatidyl-myo-inositol bearing an alpha-1,2-linked mannose residue (PIM1) to generate phosphatidyl-myo-inositol bearing alpha-1,2- and alpha-1,6-linked mannose residues (Ac1PIM2). PimB also catalyzes the addition of a mannosyl residue from GDP-Man to the position 6 of phosphatidyl-myo-inositol bearing an acylated alpha-1,2-linked mannose residue (Ac1PIM1) to generate monoacylated phosphatidyl-myo-inositol bearing alpha-1,2- and alpha-1,6-linked mannose residues (Ac1PIM2). The addition of the second mannosyl residue by PimB preferentially occurs before the acylation of the mannosyl residue transferred by PimA. Also able to transfer a mannosyl residue from GDP-Man to the position 6 of a phosphatidyl-myo-inositol (PI), but this reaction is very slow. This is GDP-mannose-dependent alpha-(1-6)-phosphatidylinositol monomannoside mannosyltransferase from Mycolicibacterium smegmatis (strain ATCC 700084 / mc(2)155) (Mycobacterium smegmatis).